The chain runs to 137 residues: Large ribosomal subunit protein uL16 (137 aa).

Positions 1-19 (MLSPKKVKFRKQQRGRRTG) are enriched in basic residues. The tract at residues 1 to 20 (MLSPKKVKFRKQQRGRRTGT) is disordered.

This sequence belongs to the universal ribosomal protein uL16 family. In terms of assembly, part of the 50S ribosomal subunit.

Its function is as follows. Binds 23S rRNA and is also seen to make contacts with the A and possibly P site tRNAs. The sequence is that of Large ribosomal subunit protein uL16 from Desulfosudis oleivorans (strain DSM 6200 / JCM 39069 / Hxd3) (Desulfococcus oleovorans).